The primary structure comprises 183 residues: Ubiquitin-conjugating enzyme E2 6 (183 aa).

Positions 1-148 (MASPSKRREM…VKEYCEKYAK (148 aa)) constitute a UBC core domain. The active-site Glycyl thioester intermediate is cysteine 85. The interval 148–183 (KPEEILSDDDDDDSMSEDGSDSDDDDDDEIVGKADP) is disordered. A compositionally biased stretch (acidic residues) spans 152–176 (ILSDDDDDDSMSEDGSDSDDDDDDE).

Belongs to the ubiquitin-conjugating enzyme family. As to expression, expressed in roots, petals, sepals and silique walls.

It catalyses the reaction S-ubiquitinyl-[E1 ubiquitin-activating enzyme]-L-cysteine + [E2 ubiquitin-conjugating enzyme]-L-cysteine = [E1 ubiquitin-activating enzyme]-L-cysteine + S-ubiquitinyl-[E2 ubiquitin-conjugating enzyme]-L-cysteine.. The protein operates within protein modification; protein ubiquitination. Accepts the ubiquitin from the E1 complex and catalyzes its covalent attachment to other proteins. The chain is Ubiquitin-conjugating enzyme E2 6 (UBC6) from Arabidopsis thaliana (Mouse-ear cress).